A 206-amino-acid chain; its full sequence is Putative NAD(P)H nitroreductase MhqN (206 aa).

FMN contacts are provided by residues 11–13 (RRS), 68–70 (QYK), 157–158 (IG), Arg193, and Arg196.

The protein belongs to the nitroreductase family. Homodimer. The cofactor is FMN.

It localises to the cytoplasm. Its function is as follows. Putative nitroreductase that may contribute to the degradation of aromatic compounds. This chain is Putative NAD(P)H nitroreductase MhqN (mhqN), found in Bacillus subtilis (strain 168).